The primary structure comprises 93 residues: Small ribosomal subunit protein uS17 (93 aa).

The protein belongs to the universal ribosomal protein uS17 family. As to quaternary structure, part of the 30S ribosomal subunit.

One of the primary rRNA binding proteins, it binds specifically to the 5'-end of 16S ribosomal RNA. In Bordetella bronchiseptica (strain ATCC BAA-588 / NCTC 13252 / RB50) (Alcaligenes bronchisepticus), this protein is Small ribosomal subunit protein uS17.